The following is a 253-amino-acid chain: MKHIPRKRFGQHFLADQAIIDAIVRAIAPAPGQPMVEIGPGLAALTQPLVERLGRLTVVELDRDLAQRLRSHGQLDVIESDVLKVDFSAVAANLGAPRIRIVGNLPYNISTPILFHLLEHVGVVEDQHFMLQKEVIDRMVAQPATSDYGRLSVMLQWRYAMEDVLFVPPESFDPPPRVDSAVVRMVPHAAPAPVAPRLLEELVQVAFSQRRKLLRHTLGRWLEARQFTGTFDTQRRAEEVPVADYVALAQACA.

S-adenosyl-L-methionine is bound by residues His12, Leu14, Gly39, Glu60, Asp81, and Asn104.

It belongs to the class I-like SAM-binding methyltransferase superfamily. rRNA adenine N(6)-methyltransferase family. RsmA subfamily.

It is found in the cytoplasm. It catalyses the reaction adenosine(1518)/adenosine(1519) in 16S rRNA + 4 S-adenosyl-L-methionine = N(6)-dimethyladenosine(1518)/N(6)-dimethyladenosine(1519) in 16S rRNA + 4 S-adenosyl-L-homocysteine + 4 H(+). Specifically dimethylates two adjacent adenosines (A1518 and A1519) in the loop of a conserved hairpin near the 3'-end of 16S rRNA in the 30S particle. May play a critical role in biogenesis of 30S subunits. The polypeptide is Ribosomal RNA small subunit methyltransferase A (Paracidovorax citrulli (strain AAC00-1) (Acidovorax citrulli)).